The following is a 61-amino-acid chain: Alpha-conotoxine-like Am1.4 (61 aa).

A signal peptide spans Met1 to Ser21. A propeptide spanning residues Phe22 to Lys44 is cleaved from the precursor.

It belongs to the conotoxin A superfamily. Post-translationally, is not hydroxylated. In terms of processing, contains 2 disulfide bonds. In terms of tissue distribution, expressed by the venom duct.

It localises to the secreted. Its function is as follows. Alpha-conotoxins act on postsynaptic membranes, they bind to the nicotinic acetylcholine receptors (nAChR) and thus inhibit them. This is Alpha-conotoxine-like Am1.4 from Conus amadis (Amadis cone).